Consider the following 347-residue polypeptide: MRAVTVTPGVPESLRLREVPEPKPGPGQVLLKPLLVGVCGTDKEIIEGRYGKAPEGSDYLILGHEALAEVAALGKGVDNVSEGDLVVPTVRRPLDCQLPVDYCPPGKYLEHGIWGLHGHAAELSITDAAYLVKVPKELRDIAVLTEPLSVVEKGVELGVESYKARLGSPPKTALVLGAGPVGLLASMVLRLMGVSITAVATRPHDSLKARLVEELGGRYIDAVHERLEGEFDLVIEATGAPSLAVQGLERLAPGGVEVLLGVYPPTGELKGLGSLLTDAVLKNKLVVGSVNAGLRHFERALAHLKEANDSLNGFPKRLITKVVPLERYQEAYVWTHDDIKVVLQVQT.

Cys39 provides a ligand contact to Zn(2+). Residue Thr41 coordinates substrate. 2 residues coordinate Zn(2+): His64 and Glu65. Substrate-binding residues include Glu110 and Glu146. Position 146 (Glu146) interacts with Zn(2+). NADP(+) is bound by residues 178 to 181, 260 to 262, and 289 to 291; these read AGPV, LGV, and SVN. Asn291 is a binding site for substrate.

The protein belongs to the zinc-containing alcohol dehydrogenase family. Glucose 1-dehydrogenase subfamily. As to quaternary structure, homodimer. It depends on Zn(2+) as a cofactor.

The catalysed reaction is D-glucose + NAD(+) = D-glucono-1,5-lactone + NADH + H(+). It catalyses the reaction D-glucose + NADP(+) = D-glucono-1,5-lactone + NADPH + H(+). In terms of biological role, catalyzes the NAD(P)(+)-dependent oxidation of D-glucose to D-gluconate via gluconolactone. To a lesser extent, is also active with xylose as substrate, but mannose, arabinose, galactose, fructose 6-phosphate, glucose 6-phosphate, glycerinaldehyde 3-phosphate, ribose, sorbitol, ethanol, erythritol, or lactose are not oxidized by the enzyme. Can utilize both NAD(+) and NADP(+) as electron acceptor, with a marked preference for NADP(+). Is involved in the degradation of glucose through a non-phosphorylative variant of the Entner-Doudoroff pathway. This Thermoproteus tenax (strain ATCC 35583 / DSM 2078 / JCM 9277 / NBRC 100435 / Kra 1) protein is Glucose 1-dehydrogenase (gdh).